Here is a 221-residue protein sequence, read N- to C-terminus: Translation initiation factor 6 (221 aa).

This sequence belongs to the eIF-6 family.

Binds to the 50S ribosomal subunit and prevents its association with the 30S ribosomal subunit to form the 70S initiation complex. This chain is Translation initiation factor 6, found in Natronomonas pharaonis (strain ATCC 35678 / DSM 2160 / CIP 103997 / JCM 8858 / NBRC 14720 / NCIMB 2260 / Gabara) (Halobacterium pharaonis).